Reading from the N-terminus, the 489-residue chain is Protein SOF1 (489 aa).

WD repeat units lie at residues 65 to 105, 113 to 158, 177 to 214, 217 to 257, 259 to 299, 303 to 342, and 346 to 385; these read GHRD…EFVS, VTGL…YSNK, DGES…PVSD, WGAD…PTQK, VQTM…RSLN, DHVS…SREI, and KRMQ…RSNV. Composition is skewed to basic and acidic residues over residues 440–459 and 466–489; these read REAN…ERKK and HKYE…TQEK. The segment at 440–489 is disordered; sequence REANERRTRKDMPYISERKKQIVGTVHKYEDSGRDRKRRKEDDKRDTQEK.

The protein belongs to the WD repeat DCAF13/WDSOF1 family. Interacts with snoRNA U3. Interacts with NOP1 and MPP10. Component of the ribosomal small subunit (SSU) processome composed of at least 40 protein subunits and snoRNA U3.

Its subcellular location is the nucleus. It is found in the nucleolus. Its function is as follows. Required for ribosomal RNA processing. This is Protein SOF1 (SOF1) from Saccharomyces cerevisiae (strain ATCC 204508 / S288c) (Baker's yeast).